Reading from the N-terminus, the 417-residue chain is Monooxygenase cfoF (417 aa).

FAD contacts are provided by residues 45–48, arginine 126, and aspartate 327; that span reads DRDK. A compositionally biased stretch (basic and acidic residues) spans 389–399; that stretch reads AHTTQLDRDQF. The interval 389–417 is disordered; it reads AHTTQLDRDQFTDGSGANDFLVGQQHSDK.

It belongs to the aromatic-ring hydroxylase family. KMO subfamily. The cofactor is FAD.

The protein operates within secondary metabolite biosynthesis; flavonoid biosynthesis. In terms of biological role, monooxygenase; part of the gene cluster that mediates the biosynthesis of chlorflavonin, a fungal flavonoid with acetolactate synthase inhibitory activity. Within the pathway, cfoF is responsible for the hydroxylation of the flavonoid skeleton at position C3. The pathway begins with the PKS-NRPS hybrid synthetase cfoA that uses benzoic acid or p-hydroxybenzoic acid as a starter unit with four rounds of chain elongation using malonyl-CoA to form the chalcone skeleton. Then, a new type of chalcone isomerase, cfoK, catalyzes the conversion of the chalcone into a flavanone by a histidine-mediated oxa-Michael addition mechanism. The desaturation of flavanone to flavone is catalyzed by a new type of flavone synthase, the flavin mononucleotide (FMN)-dependent oxidoreductase cfoJ. Monooxygenases cfoF, cfoG, and P450 cfoH are responsible for the hydroxylation of the flavonoid skeleton at sites C3, C8, and C2', respectively. Like cfoF, the dehydratase cfoI plays also a role in the hydroxylation of position C3. Methyltransferases cfoB, cfoC, and cfoD then catalyze the methylation of C7-OH, C8-OH, and C3-OH, respectively. Finally, the monooxygenase cfoE is responsible for the chlorination of flavonoid at position C3'. In Aspergillus candidus, this protein is Monooxygenase cfoF.